Here is a 152-residue protein sequence, read N- to C-terminus: Putative rho GDP-dissociation inhibitor 2 (152 aa).

It belongs to the Rho GDI family.

Its subcellular location is the cytoplasm. Regulates the GDP/GTP exchange reaction of the Rho proteins by inhibiting the dissociation of GDP from them, and the subsequent binding of GTP to them. The sequence is that of Putative rho GDP-dissociation inhibitor 2 (rdiB) from Dictyostelium discoideum (Social amoeba).